A 545-amino-acid chain; its full sequence is Acetyltransferase BOT5 (545 aa).

Residues 1–19 form the signal peptide; sequence MATIPLFFSLILFLRLYHA. N-linked (GlcNAc...) asparagine glycosylation is found at Asn70 and Asn198. His208 serves as the catalytic Proton acceptor. Asn346 and Asn445 each carry an N-linked (GlcNAc...) asparagine glycan. Positions 466–493 are disordered; that stretch reads GAGNQKSSSTRKAARHTEPTQAQTQPGR.

The protein belongs to the plant acyltransferase family.

It functions in the pathway secondary metabolite biosynthesis. In terms of biological role, acetyltransferase; part of the gene cluster that mediates the biosynthesis of botrydial. Botrydial is necessary for colonization of plant tissue by the T4 strain. It is a strain-dependent virulence factor since highly aggressive strains like SAS56 or B05 still retain substantial virulence when botrydial synthesis is impaired, since they produce also botcinic acid. The first step of botrydial biosynthesis is performed by the sesquiterpene synthase BOT2 which catalyzes the cyclization of farnesyl diphosphate (FPP) to presilphiperfolan-8-beta-ol (PSP). The cytochrome P450 monooxygenase BOT4 then catalyzes the hydroxylation at C-4 to give a probotryane intermediate. Acetylation of the hydroxyl at C-4 is carried out by the acetyltransferase BOT5, followed by the combined action of the P450 monooxygenases BOT3 and BOT1, to yield finally the glycol, via the regio- and stereospecific hydroxylations at C-10 and C-15 of the probotryane intermediates, respectively. The cleavage of the C10-C15 bond of probotryane skeleton is an intriguing and chemically important reaction, which could be mediated by some of the monooxygenases or by a combination of them. It is possible that either BOT3 or BOT1 would oxidize either the 10- or the 15-hydroxy group to the hydroperoxide derivative, which would then undergo heterolytic fragmentation to give the dialdehyde botrydial. Finally, the dehydrogenase BOT7 might be involved in the conversion of botrydial to dihydrobotrydial. This chain is Acetyltransferase BOT5, found in Botryotinia fuckeliana (Noble rot fungus).